A 553-amino-acid polypeptide reads, in one-letter code: MKKYLGIIVDAVSRRQFKGEITVENGKILRVEEKEHDHERYILPGLVDAHVHIESSMTVPSVFARMAVAKGTVAVVSDPHEIANVMGEEGIDFMLGDSKRSPLKVFFGVPSCVPATPFESAGSVLDAEAVDRLLAREDLYYLSEMMNFPGVVLGFPDVMAKLESAKKCGKVIDGHAPGLRGADLETYIGVGISTDHESFTYEEAVEKIKLGMKILIREGSSARNFETLYSLIDEYPEAVMLCTDDSHPDTLIYEGHIDKLIRRGQEKGLDIFNLIRAAVINPVEHYGLNVGLLREGDPADFITVDDLKSFNVLSTFIDGECVYENGKVLFPMKKVPAKNVFNRNKISIDAAKLAVPAEETGDRKEGMRKIRVIVARDGELVTGQELAFPKVENGNMVSDPEKDILKMVVLSRYADDPVQIGFIKNIGLKEGAIASSIAHDSHNIIAVGATDKDIVEAVNRLVENKGGIVVGTAENLLDLPLEVAGLMSTLDGVEVASRYRLLNEEARKLGTSLESPFMTLAFMSLLVIPELKLGDKGLFDVTKFEFVELFAEE.

The protein belongs to the metallo-dependent hydrolases superfamily. Adenine deaminase family. The cofactor is Mn(2+).

The enzyme catalyses adenine + H2O + H(+) = hypoxanthine + NH4(+). In Methanosarcina acetivorans (strain ATCC 35395 / DSM 2834 / JCM 12185 / C2A), this protein is Adenine deaminase.